Reading from the N-terminus, the 484-residue chain is Cobyric acid synthase (484 aa).

One can recognise a GATase cobBQ-type domain in the interval 251-438; that stretch reads ALKVAVPVLS…LHGLFGSDAY (188 aa). The Nucleophile role is filled by C333. H430 is an active-site residue.

Belongs to the CobB/CobQ family. CobQ subfamily.

It participates in cofactor biosynthesis; adenosylcobalamin biosynthesis. Its function is as follows. Catalyzes amidations at positions B, D, E, and G on adenosylcobyrinic A,C-diamide. NH(2) groups are provided by glutamine, and one molecule of ATP is hydrogenolyzed for each amidation. The polypeptide is Cobyric acid synthase (Rhizobium meliloti (strain 1021) (Ensifer meliloti)).